Reading from the N-terminus, the 103-residue chain is Small ribosomal subunit protein uS10 (103 aa).

Belongs to the universal ribosomal protein uS10 family. As to quaternary structure, part of the 30S ribosomal subunit.

Its function is as follows. Involved in the binding of tRNA to the ribosomes. The chain is Small ribosomal subunit protein uS10 from Campylobacter jejuni subsp. jejuni serotype O:6 (strain 81116 / NCTC 11828).